The sequence spans 695 residues: DUF724 domain-containing protein 3 (695 aa).

The disordered stretch occupies residues 376–464 (ITVTPLKQQD…GTSDTIRVDD (89 aa)). A compositionally biased stretch (basic and acidic residues) spans 384–402 (QDAETEGKKSPKKTPEPVK). Positions 434-459 (NQNSNLNETDETCNVSKAGVNGTSDT) are enriched in polar residues. The 186-residue stretch at 509–694 (PFTKNLPFWK…LEFITSVLAP (186 aa)) folds into the DUF724 domain. A coiled-coil region spans residues 614-684 (VEERKCLEKR…TIDQEIANVE (71 aa)).

As to quaternary structure, homodimer.

In terms of biological role, may be involved in the polar growth of plant cells via transportation of RNAs. This chain is DUF724 domain-containing protein 3, found in Arabidopsis thaliana (Mouse-ear cress).